The chain runs to 371 residues: Protein-tyrosine sulfotransferase 2 (371 aa).

The Cytoplasmic portion of the chain corresponds to 1–8 (MRVTMRRV). Residues 9–25 (LLAVGSVVALMVTLHLG) form a helical; Signal-anchor for type II membrane protein membrane-spanning segment. Topologically, residues 26 to 371 (QQVLECQHVL…QVTQNTSSSH (346 aa)) are lumenal. Residue 76–80 (RSGTT) coordinates 3'-phosphoadenylyl sulfate. Cys94 and Cys154 are disulfide-bonded. The Proton donor/acceptor role is filled by Glu97. The segment at 99-103 (RIIPR) is interaction with peptide substrate. 3'-phosphoadenylyl sulfate is bound by residues Arg181, Ser189, and Arg193. A disulfide bond links Cys223 and Cys231. 3'-phosphoadenylyl sulfate contacts are provided by residues Tyr236, 283 to 292 (STDQVIKPVN), and Lys298. N-linked (GlcNAc...) asparagine glycosylation is found at Asn341 and Asn366.

This sequence belongs to the protein sulfotransferase family.

It is found in the golgi apparatus membrane. The enzyme catalyses L-tyrosyl-[protein] + 3'-phosphoadenylyl sulfate = O-sulfo-L-tyrosine-[protein] + adenosine 3',5'-bisphosphate + H(+). Functionally, catalyzes the O-sulfation of tyrosine residues within acidic motifs of polypeptides, using 3'-phosphoadenylyl sulfate (PAPS) as cosubstrate. This is Protein-tyrosine sulfotransferase 2 (TPST2) from Gallus gallus (Chicken).